A 287-amino-acid chain; its full sequence is 3-methyl-2-oxobutanoate hydroxymethyltransferase (287 aa).

Residues 1-19 (MSTLPKTLTLDTSTSRANP) show a composition bias toward polar residues. A disordered region spans residues 1 to 24 (MSTLPKTLTLDTSTSRANPTPQPM). Mg(2+) contacts are provided by Asp-66 and Asp-105. Residues 66-67 (DS), Asp-105, and Lys-135 each bind 3-methyl-2-oxobutanoate. A Mg(2+)-binding site is contributed by Glu-137. The active-site Proton acceptor is the Glu-204.

This sequence belongs to the PanB family. In terms of assembly, homodecamer; pentamer of dimers. The cofactor is Mg(2+).

It is found in the cytoplasm. The enzyme catalyses 3-methyl-2-oxobutanoate + (6R)-5,10-methylene-5,6,7,8-tetrahydrofolate + H2O = 2-dehydropantoate + (6S)-5,6,7,8-tetrahydrofolate. Its pathway is cofactor biosynthesis; (R)-pantothenate biosynthesis; (R)-pantoate from 3-methyl-2-oxobutanoate: step 1/2. Its function is as follows. Catalyzes the reversible reaction in which hydroxymethyl group from 5,10-methylenetetrahydrofolate is transferred onto alpha-ketoisovalerate to form ketopantoate. The polypeptide is 3-methyl-2-oxobutanoate hydroxymethyltransferase (Sphingopyxis alaskensis (strain DSM 13593 / LMG 18877 / RB2256) (Sphingomonas alaskensis)).